The sequence spans 466 residues: MSVVPVADVLQGRVAVDSEVTVRGWVRTRRDSKAGFSFLAVYDGSCFDPVQAVINNSLPNYNQEVLRLTTGCSVIVTGKVVASQGQGQSFEIQATSVEVTGWVEDPDTYPMAAKRHSIEYLREVAHLRPRTNLIGAVARVRHTLAQALHRFFNEQGFFWVSTPLITASDTEGAGEMFRVSTLDLENLPRNDQGKVDFDKDFFGKESFLTVSGQLNGETYACALSKIYTFGPTFRAENSNTSRHLAEFWMLEPEVAFANLNDVAGLAEAMLKYVFKAVLEERADDMQFFAERVDKDAIDRLQRFITADFAQVDYTDAVTILENCGKQFENPVYWGVDLSSEHERYLAEEHFKAPVVVKNYPKDIKAFYMRLNEDGKTVAAMDVLAPGIGEIIGGSQREERLDVLDARMAEMGLNKEDYWWYRDLRRYGTVPHSGFGLGFERLIAYVTGVQNVRDVIPFPRTPRNATF.

It belongs to the class-II aminoacyl-tRNA synthetase family. In terms of assembly, homodimer.

Its subcellular location is the cytoplasm. The catalysed reaction is tRNA(Asn) + L-asparagine + ATP = L-asparaginyl-tRNA(Asn) + AMP + diphosphate + H(+). This Klebsiella pneumoniae subsp. pneumoniae (strain ATCC 700721 / MGH 78578) protein is Asparagine--tRNA ligase.